The primary structure comprises 781 residues: Catenin beta-1 (781 aa).

Ala2 is modified (N-acetylalanine). The segment at Ala2–Ser23 is interaction with VCL. Residue Ser23 is modified to Phosphoserine; by GSK3-beta; alternate. The O-linked (GlcNAc) serine; alternate glycan is linked to Ser23. Ser29 bears the Phosphoserine; by GSK3-beta mark. Phosphoserine; by GSK3-beta and HIPK2 occurs at positions 33 and 37. The interval Gly34–Val57 is disordered. Thr41 is subject to Phosphothreonine; by GSK3-beta. Ser45 is modified (phosphoserine). Lys49 bears the N6-acetyllysine mark. A Phosphotyrosine; by PTK6 modification is found at Tyr64. Tyr142 carries the phosphotyrosine; by FYN and PTK6 modification. ARM repeat units lie at residues Arg151–Ser191, Gln193–Ser234, Gly235–Ala276, Gly277–Ser318, Gly319–Ala360, Gly361–Ser389, Gly400–Val441, Gly442–Ala484, Tyr489–Gln530, Gly531–Glu571, Asn594–Ala636, and Thr637–Lys666. The interaction with BCL9 stretch occupies residues Leu156 to Leu178. At Ser191 the chain carries Phosphoserine. Ser246 bears the Phosphoserine; by CDK5 mark. 2 positions are modified to phosphotyrosine: Tyr331 and Tyr333. Ser552 is modified (phosphoserine). Phosphothreonine is present on Thr556. Cys619 carries the S-nitrosocysteine modification. Ser675 carries the phosphoserine modification. Residues His720–Leu781 are disordered. Over residues Met734 to Gly745 the composition is skewed to basic and acidic residues. Residues Asn772–Leu781 form an interaction with SCRIB region.

The protein belongs to the beta-catenin family. Two separate complex-associated pools are found in the cytoplasm. The majority is present as component of an E-cadherin/ catenin adhesion complex composed of at least E-cadherin/CDH1 and beta-catenin/CTNNB1, and possibly alpha-catenin/CTNNA1; the complex is located to adherens junctions. The stable association of CTNNA1 is controversial as CTNNA1 was shown not to bind to F-actin when assembled in the complex. Alternatively, the CTNNA1-containing complex may be linked to F-actin by other proteins such as LIMA1. Another cytoplasmic pool is part of a large complex containing AXIN1, AXIN2, APC, CSNK1A1 and GSK3B that promotes phosphorylation on N-terminal Ser and Thr residues and ubiquitination of CTNNB1. Interacts directly with AXIN1; the interaction is regulated by CK2 via BTRC and its subsequent degradation by the proteasome. Interacts directly with AXIN1; the interaction is regulated by CDK2 phosphorylation. Wnt-dependent activation of DVL antagonizes the action of GSK3B. When GSK3B activity is inhibited the complex dissociates, CTNNB1 is dephosphorylated and is no longer targeted for destruction. The stabilized protein translocates to the nucleus, where it binds TCF/LEF-1 family members, BCL9, BCL9L and possibly also RUVBL1 and CHD8. Binds CTNNBIP and EP300. CTNNB1 forms a ternary complex with LEF1 and EP300 that is disrupted by CTNNBIP1 binding. Interacts with TAX1BP3 (via the PDZ domain); this interaction inhibits the transcriptional activity of CTNNB1. Interacts with AJAP1, BAIAP1, CARM1, CTNNA3, CXADR and PCDH11Y. Binds NHERF1. Interacts with GLIS2. Interacts with XIRP1. Interacts with PTPRU (via the cytoplasmic juxtamembrane domain) and with SLC30A9. Interacts with EMD. Interacts with SCRIB. Interacts with TNIK and TCF7L2. Interacts with SESTD1 and TRPC4. Interacts directly with AXIN1; the interaction is regulated by CDK2 phosphorylation of AXIN1. Interacts with CAV1. Interacts with TRPV4. The TRPV4 and CTNNB1 complex can interact with CDH1. Interacts with VCL. Interacts with PTPRJ. Interacts with PKT7. Interacts with NANOS1. Interacts with CDK2, NDRG2, NEK2 and CDK5. Found in a complex composed of MACF1, APC, AXIN1, CTNNB1 and GSK3B. Interacts with PTK6. Interacts with SOX7; this interaction may lead to proteasomal degradation of active CTNNB1 and thus inhibition of Wnt/beta-catenin-stimulated transcription. Identified in a complex with HINT1 and MITF. Interacts with FHIT. The CTNNB1 and TCF4 complex interacts with PML. Interacts with FERMT2. Identified in a complex with TCF4 and FERMT2. Interacts with RAPGEF2. Interacts with FAT1 (via the cytoplasmic domain). Interacts with RORA. May interact with P-cadherin/CDH3. Interacts with RNF220. Interacts with CTNND2. Interacts (via the C-terminal region) with CBY1. The complex composed, at least, of APC, CTNNB1 and GSK3B interacts with JPT1; the interaction requires the inactive form of GSK3B (phosphorylated at 'Ser-9'). Interacts with DLG5. Interacts with FAM53B; promoting translocation to the nucleus. Interacts with TMEM170B. Interacts with AHI1. Interacts with GID8. Component of an cadherin:catenin adhesion complex composed of at least of CDH26, beta-catenin/CTNNB1, alpha-catenin/CTNNA1 and p120 catenin/CTNND1. Forms a complex comprising APPL1, RUVBL2, APPL2, HDAC1 and HDAC2. Interacts with IRF2BPL; mediates the ubiquitination and degradation of CTNNB1. Interacts with AMFR. Interacts with LMBR1L. Interacts with SOX30; prevents interaction of CTNNB1 with TCF7L2/TCF4 and leads to inhibition of Wnt signaling. Interacts with SOX9; inhibiting CTNNB1 activity by competing with the binding sites of TCF/LEF within CTNNB1, thereby inhibiting the Wnt signaling. Interacts with SPN/CD43 cytoplasmic tail. Interacts (when phosphorylated at Tyr-333) with isoform M2 of PKM (PKM2); promoting transcription activation. Interacts with PKP2 (via HEAD domain). Interacts with CDH1. Interacts (when unphosphorylated) with FLYWCH1, perhaps preventing interaction of CTNNB1 with TCF4, and thereby regulating transcription activation; phosphorylation of CTNNB1 may inhibit the interaction. Interacts (via the central armadillo domains) with probable transcriptional regulator ADNP (via N-terminal region); interaction is direct and stabilizes CTNNB1 by modulating its phosphorylation by glycogen synthase kinase-3 beta GSK3B. Interacts with NR5A2. Interacts with DSG2; the interaction promotes localization of CTNNB1 at cell junctions thus reducing its nuclear localization and subsequent transcription of CTNNB1/TCF-target genes. In terms of processing, phosphorylation by GSK3B requires prior phosphorylation of Ser-45 by another kinase. Phosphorylation proceeds then from Thr-41 to Ser-33. Phosphorylated by NEK2. EGF stimulates tyrosine phosphorylation. Phosphorylated on Ser-33 and Ser-37 by HIPK2. This phosphorylation triggers proteasomal degradation. Phosphorylation at Ser-552 by AMPK promotes stabilization of the protein, enhancing TCF/LEF-mediated transcription. Phosphorylation on Ser-191 and Ser-246 by CDK5. Phosphorylation by CDK2 regulates insulin internalization. Phosphorylation by PTK6 at Tyr-64, Tyr-142, Tyr-331 and/or Tyr-333 with the predominant site at Tyr-64 is not essential for inhibition of transcriptional activity. Phosphorylation by SRC at Tyr-333 promotes interaction with isoform M2 of PKM (PKM2); promoting transcription activation. Post-translationally, ubiquitinated by the SCF(BTRC) E3 ligase complex when phosphorylated by GSK3B, leading to its degradation. Ubiquitinated by a E3 ubiquitin ligase complex containing UBE2D1, SIAH1, CACYBP/SIP, SKP1, APC and TBL1X, leading to its subsequent proteasomal degradation. Ubiquitinated and degraded following interaction with SOX9. Ubiquitinated via 'Lys-11'- and 'Lys-29'-linked ubiquitin chains by UBR5, leading to its stabilization. S-nitrosylation at Cys-619 within adherens junctions promotes VEGF-induced, NO-dependent endothelial cell permeability by disrupting interaction with E-cadherin, thus mediating disassembly adherens junctions. In terms of processing, O-glycosylation at Ser-23 decreases nuclear localization and transcriptional activity, and increases localization to the plasma membrane and interaction with E-cadherin CDH1. Post-translationally, deacetylated at Lys-49 by SIRT1. Expressed in the testis.

It is found in the cytoplasm. Its subcellular location is the nucleus. The protein resides in the cytoskeleton. The protein localises to the cell junction. It localises to the adherens junction. It is found in the cell membrane. Its subcellular location is the microtubule organizing center. The protein resides in the centrosome. The protein localises to the spindle pole. It localises to the synapse. It is found in the cilium basal body. Functionally, key downstream component of the canonical Wnt signaling pathway. In the absence of Wnt, forms a complex with AXIN1, AXIN2, APC, CSNK1A1 and GSK3B that promotes phosphorylation on N-terminal Ser and Thr residues and ubiquitination of CTNNB1 via BTRC and its subsequent degradation by the proteasome. In the presence of Wnt ligand, CTNNB1 is not ubiquitinated and accumulates in the nucleus, where it acts as a coactivator for transcription factors of the TCF/LEF family, leading to activate Wnt responsive genes. Also acts as a coactivator for other transcription factors, such as NR5A2. Promotes epithelial to mesenchymal transition/mesenchymal to epithelial transition (EMT/MET) via driving transcription of CTNNB1/TCF-target genes. Involved in the regulation of cell adhesion, as component of an E-cadherin:catenin adhesion complex. Acts as a negative regulator of centrosome cohesion. Involved in the CDK2/PTPN6/CTNNB1/CEACAM1 pathway of insulin internalization. Blocks anoikis of malignant kidney and intestinal epithelial cells and promotes their anchorage-independent growth by down-regulating DAPK2. Disrupts PML function and PML-NB formation by inhibiting RANBP2-mediated sumoylation of PML. Promotes neurogenesis by maintaining sympathetic neuroblasts within the cell cycle. Involved in chondrocyte differentiation via interaction with SOX9: SOX9-binding competes with the binding sites of TCF/LEF within CTNNB1, thereby inhibiting the Wnt signaling. Acts as a positive regulator of odontoblast differentiation during mesenchymal tooth germ formation, via promoting the transcription of differentiation factors such as LEF1, BMP2 and BMP4. Activity is repressed in a MSX1-mediated manner at the bell stage of mesenchymal tooth germ formation which prevents premature differentiation of odontoblasts. The sequence is that of Catenin beta-1 from Rattus norvegicus (Rat).